A 565-amino-acid polypeptide reads, in one-letter code: Berberine bridge enzyme-like C-2 (565 aa).

Positions methionine 1–alanine 17 are cleaved as a signal peptide. N-linked (GlcNAc...) asparagine glycosylation is found at asparagine 28 and asparagine 40. Cysteine 32 and cysteine 94 are oxidised to a cystine. The FAD-binding PCMH-type domain maps to tyrosine 72–valine 248. Position 109 is a pros-8alpha-FAD histidine (histidine 109). N-linked (GlcNAc...) asparagine glycosylation is found at asparagine 363 and asparagine 502.

The protein belongs to the oxygen-dependent FAD-linked oxidoreductase family. FAD serves as cofactor.

The protein resides in the vacuole. The protein operates within alkaloid biosynthesis; nicotine biosynthesis. Its function is as follows. Involved in the biosynthesis of pyridine alkaloid natural products, leading mainly to the production of anabasine, anatabine, nicotine and nornicotine, effective deterrents against herbivores with antiparasitic and pesticide properties (neurotoxins); nornicotine serves as the precursor in the synthesis of the carcinogen compound N'-nitrosonornicotine (NNN). Catalyzes a late oxidation step subsequent to the pyridine ring condensation reaction in the biosynthesis of alkaloids. In Nicotiana tabacum (Common tobacco), this protein is Berberine bridge enzyme-like C-2.